Here is a 113-residue protein sequence, read N- to C-terminus: Putative pterin-4-alpha-carbinolamine dehydratase (113 aa).

It belongs to the pterin-4-alpha-carbinolamine dehydratase family.

The catalysed reaction is (4aS,6R)-4a-hydroxy-L-erythro-5,6,7,8-tetrahydrobiopterin = (6R)-L-erythro-6,7-dihydrobiopterin + H2O. This is Putative pterin-4-alpha-carbinolamine dehydratase from Legionella pneumophila (strain Paris).